Here is a 91-residue protein sequence, read N- to C-terminus: Putative regulatory protein Cphy_2880 (91 aa).

The protein belongs to the RemA family.

In Lachnoclostridium phytofermentans (strain ATCC 700394 / DSM 18823 / ISDg) (Clostridium phytofermentans), this protein is Putative regulatory protein Cphy_2880.